A 346-amino-acid chain; its full sequence is Dehydrogenase azaJ (346 aa).

43-48 provides a ligand contact to NADP(+); it reads VDYATQ. A substrate-binding site is contributed by 133–140; sequence LAFSTAIV. NADP(+)-binding positions include 170-173, 193-196, Tyr211, and 251-252; these read ATSV, SPHN, and LN. 269–273 serves as a coordination point for substrate; that stretch reads APPNV. 336–337 is an NADP(+) binding site; sequence VS.

It belongs to the zinc-containing alcohol dehydrogenase family.

The protein operates within secondary metabolite biosynthesis. Dehydrogenase; part of the gene cluster that mediates the biosynthesis of azaphilones, a class of fungal metabolites characterized by a highly oxygenated pyrano-quinone bicyclic core and exhibiting a broad range of bioactivities. In the first step, the non-reducing polyketide synthase azaA forms the hexaketide precursor from successive condensations of five malonyl-CoA units, presumably with a simple acetyl-CoA starter unit. The reactive polyketide chain then undergoes a PT-mediated C2-C7 cyclization to afford the aromatic ring and is eventually released as an aldehyde through the R-domain. The putative ketoreductase azaE is proposed to catalyze the reduction of the terminal ketone resulting in the early culture product FK17-P2a. The monooxygenase azaH was demonstrated to be the only enzyme required to convert FK17-P2a to azanigerone E. AzaH first hydroxylates the benzaldehyde intermediate FK17-P2a at C4, which triggers the formation of the pyran-ring to afford azanigerone E. In parallel, the 2,4-dimethylhexanoyl chain is synthesized by the HR-PKS azaB and is proposed to be transferred to the C4-hydroxyl of azanigerone E by the acyltransferase azaD directly from the ACP domain of azaB. Alternatively, the 2,4-dimethyl-hexanoyl chain may be offloaded from the HR-PKS as a carboxylic acid and converted to an acyl-CoA by azaF. The resulting acyl-CoA molecule could then be taken up as a substrate by AzaD to form azanigerone B. To yield the carboxylic acid substituent in azanigerone A, the hydroxypropyl side chain of azanigerone B would need to undergo a C-C oxidative cleavage catalyzed by cytochrome P450 AzaI. AzaI is proposed to act on a vicinal diol that leads to a C-C bond scission either through an alkoxyradical intermediate or a peroxy complex. In the biosynthesis of azanigerone A, azanigerone B first undergoes hydroxylation at C10, possibly catalyzed by one of the two FAD-dependent monooxygenases encoded in the cluster, azaG or azaL, resulting in the vicinal diol azanigerone C. Oxidative cleavage of azanigerone C by azaI would yield the corresponding aldehyde derivative of azanigerone A. Finally, the dehydrogenase azaJ is proposed to convert the aldehyde functional group into the carboxylic acid, completing the conversion from azanigerone B to azanigerone A. Alternatively, the oxidation of aldehyde to carboxylic acid may be catalyzed by the same P450 enzyme azaI via consecutive oxidation or by endogenous alcohol dehydrogenase. The polypeptide is Dehydrogenase azaJ (Aspergillus niger (strain ATCC 1015 / CBS 113.46 / FGSC A1144 / LSHB Ac4 / NCTC 3858a / NRRL 328 / USDA 3528.7)).